Consider the following 192-residue polypeptide: Cytidylate kinase (192 aa).

7 to 15 (GPAGSGKST) provides a ligand contact to ATP.

The protein belongs to the cytidylate kinase family. Type 2 subfamily.

It is found in the cytoplasm. The enzyme catalyses CMP + ATP = CDP + ADP. It carries out the reaction dCMP + ATP = dCDP + ADP. The sequence is that of Cytidylate kinase from Natronomonas pharaonis (strain ATCC 35678 / DSM 2160 / CIP 103997 / JCM 8858 / NBRC 14720 / NCIMB 2260 / Gabara) (Halobacterium pharaonis).